A 385-amino-acid polypeptide reads, in one-letter code: Prophage integrase IntS (385 aa).

Positions 91 to 172 (NSFSAIYKEW…RCGEVFRYAI (82 aa)) constitute a Core-binding (CB) domain. A Tyr recombinase domain is found at 195–373 (KNFPFLPADQ…QYLDKRREMM (179 aa)). Active-site residues include Arg234, Lys261, His324, Arg327, and His350. Tyr360 (O-(3'-phospho-DNA)-tyrosine intermediate) is an active-site residue.

Belongs to the 'phage' integrase family.

Integrase is necessary for integration of the phage into the host genome by site-specific recombination. In conjunction with excisionase, integrase is also necessary for excision of the prophage from the host genome. This Escherichia coli (strain K12) protein is Prophage integrase IntS (intS).